A 220-amino-acid polypeptide reads, in one-letter code: Octanoyltransferase (220 aa).

In terms of domain architecture, BPL/LPL catalytic spans 31-206 (DDTPDEVWLV…ELVTLLDYEQ (176 aa)). Substrate contacts are provided by residues 70 to 77 (RGGQVTYH), 137 to 139 (SLG), and 150 to 152 (GLA). The active-site Acyl-thioester intermediate is Cys168.

The protein belongs to the LipB family.

It localises to the cytoplasm. The catalysed reaction is octanoyl-[ACP] + L-lysyl-[protein] = N(6)-octanoyl-L-lysyl-[protein] + holo-[ACP] + H(+). It participates in protein modification; protein lipoylation via endogenous pathway; protein N(6)-(lipoyl)lysine from octanoyl-[acyl-carrier-protein]: step 1/2. Its function is as follows. Catalyzes the transfer of endogenously produced octanoic acid from octanoyl-acyl-carrier-protein onto the lipoyl domains of lipoate-dependent enzymes. Lipoyl-ACP can also act as a substrate although octanoyl-ACP is likely to be the physiological substrate. In Vibrio campbellii (strain ATCC BAA-1116), this protein is Octanoyltransferase.